The primary structure comprises 138 residues: Small ribosomal subunit protein uS8 (138 aa).

This sequence belongs to the universal ribosomal protein uS8 family. In terms of assembly, part of the 30S ribosomal subunit. Contacts proteins S5 and S12.

Its function is as follows. One of the primary rRNA binding proteins, it binds directly to 16S rRNA central domain where it helps coordinate assembly of the platform of the 30S subunit. The chain is Small ribosomal subunit protein uS8 from Thermus aquaticus.